Reading from the N-terminus, the 75-residue chain is Putative antitoxin VapB29 (75 aa).

Possibly the antitoxic component of a type II toxin-antitoxin (TA) system. Its cognate toxin is VapC29 (Potential). The chain is Putative antitoxin VapB29 (vapB29) from Mycobacterium tuberculosis (strain CDC 1551 / Oshkosh).